Reading from the N-terminus, the 208-residue chain is Small ribosomal subunit protein uS4 (208 aa).

Residues 97-158 (TRLDNVIYRM…RAQKYLCVQE (62 aa)) form the S4 RNA-binding domain.

The protein belongs to the universal ribosomal protein uS4 family. Part of the 30S ribosomal subunit. Contacts protein S5. The interaction surface between S4 and S5 is involved in control of translational fidelity.

In terms of biological role, one of the primary rRNA binding proteins, it binds directly to 16S rRNA where it nucleates assembly of the body of the 30S subunit. Its function is as follows. With S5 and S12 plays an important role in translational accuracy. This Xylella fastidiosa (strain 9a5c) protein is Small ribosomal subunit protein uS4.